Consider the following 527-residue polypeptide: AAA ATPase forming ring-shaped complexes (527 aa).

A compositionally biased stretch (low complexity) spans 1–18 (MVTMSSPTDSSPSNSFSD). Residues 1-38 (MVTMSSPTDSSPSNSFSDFNREEQSRLSDEVRQLKRTN) form a disordered region. Basic and acidic residues predominate over residues 19–33 (FNREEQSRLSDEVRQ). Positions 21–53 (REEQSRLSDEVRQLKRTNSDLGARNAKLAEMLK) form a coiled coil. 257 to 262 (GCGKTL) provides a ligand contact to ATP. The disordered stretch occupies residues 492-515 (DENQQSEDLPNTSNPDEWSRITGR). Residues 497–507 (SEDLPNTSNPD) show a composition bias toward polar residues.

Belongs to the AAA ATPase family. In terms of assembly, homohexamer. Assembles into a hexameric ring structure.

The protein is AAA ATPase forming ring-shaped complexes of Corynebacterium glutamicum (strain R).